The following is a 289-amino-acid chain: Extracellular ribonuclease (289 aa).

An N-terminal signal peptide occupies residues 1-24; that stretch reads MTKKLWFLPIVCLFFILGWTAPSA. A propeptide spanning residues 25–51 is cleaved from the precursor; sequence SAGAPADTNLYSRLAVSTAGGTTLFPQ. Residues 177–197 are disordered; sequence FDNGGSEYPKAPGNYYDGDSW.

The protein localises to the secreted. Mg(2+)-activated ribonuclease which hydrolyzes RNA apparently nonspecifically into oligonucleotides with 5'-terminal phosphate. This is Extracellular ribonuclease (bsn) from Bacillus amyloliquefaciens (Bacillus velezensis).